The primary structure comprises 377 residues: Copper-containing nitrite reductase (377 aa).

The tat-type signal signal peptide spans 1 to 35 (MTNTLQMTRRTMLTGAAVAGALTPILTSGGGNASP). Plastocyanin-like domains are found at residues 99–194 (MTFD…IMVL) and 259–360 (GAVG…FKVT). 7 residues coordinate Cu cation: H132, H137, H172, C173, H182, M187, and H343.

The protein belongs to the multicopper oxidase family. Homotrimer. It depends on Cu(2+) as a cofactor. The cofactor is Cu(+). Requires FAD as cofactor. Predicted to be exported by the Tat system. The position of the signal peptide cleavage has not been experimentally proven.

It localises to the periplasm. The catalysed reaction is nitric oxide + Fe(III)-[cytochrome c] + H2O = Fe(II)-[cytochrome c] + nitrite + 2 H(+). It participates in nitrogen metabolism; nitrate reduction (denitrification); dinitrogen from nitrate: step 2/4. The sequence is that of Copper-containing nitrite reductase (nirK) from Rhizobium sullae (Rhizobium hedysari).